Here is a 175-residue protein sequence, read N- to C-terminus: Bifunctional protein PyrR (175 aa).

Residues Thr40–Arg41, Asp102–Thr110, Arg135, and Val159 each bind substrate. A PRPP-binding motif is present at residues Val98 to Thr110.

Belongs to the purine/pyrimidine phosphoribosyltransferase family. PyrR subfamily. Homodimer and homohexamer; in equilibrium.

The catalysed reaction is UMP + diphosphate = 5-phospho-alpha-D-ribose 1-diphosphate + uracil. Its function is as follows. Regulates transcriptional attenuation of the pyrimidine nucleotide (pyr) operon by binding in a uridine-dependent manner to specific sites on pyr mRNA. This disrupts an antiterminator hairpin in the RNA and favors formation of a downstream transcription terminator, leading to a reduced expression of downstream genes. Also displays a weak uracil phosphoribosyltransferase activity which is not physiologically significant. This is Bifunctional protein PyrR from Staphylococcus epidermidis (strain ATCC 12228 / FDA PCI 1200).